We begin with the raw amino-acid sequence, 256 residues long: Uridylate kinase (256 aa).

10–13 (KLSG) is a binding site for ATP. Gly52 contacts UMP. Positions 53 and 57 each coordinate ATP. UMP contacts are provided by residues Asp72 and 134–141 (NGQPFLTT). Positions 168 and 171 each coordinate ATP.

It belongs to the UMP kinase family. As to quaternary structure, homohexamer.

Its subcellular location is the cytoplasm. The catalysed reaction is UMP + ATP = UDP + ADP. Its pathway is pyrimidine metabolism; CTP biosynthesis via de novo pathway; UDP from UMP (UMPK route): step 1/1. With respect to regulation, inhibited by UTP. Functionally, catalyzes the reversible phosphorylation of UMP to UDP. This chain is Uridylate kinase, found in Frankia alni (strain DSM 45986 / CECT 9034 / ACN14a).